A 414-amino-acid chain; its full sequence is Esterase FrsA (414 aa).

Belongs to the FrsA family.

The catalysed reaction is a carboxylic ester + H2O = an alcohol + a carboxylate + H(+). Functionally, catalyzes the hydrolysis of esters. This is Esterase FrsA from Escherichia coli O81 (strain ED1a).